The sequence spans 178 residues: Endothelin-2 (178 aa).

The signal sequence occupies residues 1–24 (MVSVPTAWCSVALALLVALHEGKD). Residues 25 to 46 (QAAATLEQPASSPRARAAHLRL) constitute a propeptide that is removed on maturation. Cystine bridges form between Cys49–Cys63 and Cys51–Cys59. The propeptide occupies 70–178 (VNTPGQTAPY…RTTHSRHRKR (109 aa)). Residues 96 to 111 (CECSSARDPACATFCH) are endothelin-like. The disordered stretch occupies residues 154–178 (KTHFAKRQQEATREPRTTHSRHRKR). A compositionally biased stretch (basic and acidic residues) spans 160–170 (RQQEATREPRT).

This sequence belongs to the endothelin/sarafotoxin family.

The protein resides in the secreted. Functionally, endothelins are endothelium-derived vasoconstrictor peptides. The sequence is that of Endothelin-2 (EDN2) from Oryctolagus cuniculus (Rabbit).